A 762-amino-acid polypeptide reads, in one-letter code: Multifunctional tryptophan biosynthesis protein (762 aa).

Residues 25–224 (NLILIDNYDS…LHMQGGTWAE (200 aa)) form the Glutamine amidotransferase type-1 domain. L-glutamine is bound at residue 76–78 (GPG). Catalysis depends on C104, which acts as the Nucleophile; for GATase activity. L-glutamine is bound by residues Q108 and 154-155 (SL). Catalysis depends on for GATase activity residues H198 and E200. Residues 251 to 515 (ILQKIYAHRK…DATQFIRELC (265 aa)) form an indole-3-glycerol phosphate synthase region. The segment at 531–762 (LVKICGTRSA…EFVKAAKSVR (232 aa)) is N-(5'-phosphoribosyl)anthranilate isomerase.

Tetramer of two components I and two components II.

It carries out the reaction chorismate + L-glutamine = anthranilate + pyruvate + L-glutamate + H(+). The catalysed reaction is N-(5-phospho-beta-D-ribosyl)anthranilate = 1-(2-carboxyphenylamino)-1-deoxy-D-ribulose 5-phosphate. The enzyme catalyses 1-(2-carboxyphenylamino)-1-deoxy-D-ribulose 5-phosphate + H(+) = (1S,2R)-1-C-(indol-3-yl)glycerol 3-phosphate + CO2 + H2O. Its pathway is amino-acid biosynthesis; L-tryptophan biosynthesis; L-tryptophan from chorismate: step 1/5. It participates in amino-acid biosynthesis; L-tryptophan biosynthesis; L-tryptophan from chorismate: step 3/5. The protein operates within amino-acid biosynthesis; L-tryptophan biosynthesis; L-tryptophan from chorismate: step 4/5. Trifunctional enzyme bearing the Gln amidotransferase (GATase) domain of anthranilate synthase, indole-glycerolphosphate synthase, and phosphoribosylanthranilate isomerase activities. The polypeptide is Multifunctional tryptophan biosynthesis protein (trp-1) (Neurospora crassa (strain ATCC 24698 / 74-OR23-1A / CBS 708.71 / DSM 1257 / FGSC 987)).